The chain runs to 207 residues: Imidazole glycerol phosphate synthase subunit HisH (207 aa).

Residues 1–206 enclose the Glutamine amidotransferase type-1 domain; sequence MMIVIDYDAG…KEYVYENTAR (206 aa). Residue Cys79 is the Nucleophile of the active site. Catalysis depends on residues His181 and Glu183.

In terms of assembly, heterodimer of HisH and HisF.

The protein resides in the cytoplasm. It catalyses the reaction 5-[(5-phospho-1-deoxy-D-ribulos-1-ylimino)methylamino]-1-(5-phospho-beta-D-ribosyl)imidazole-4-carboxamide + L-glutamine = D-erythro-1-(imidazol-4-yl)glycerol 3-phosphate + 5-amino-1-(5-phospho-beta-D-ribosyl)imidazole-4-carboxamide + L-glutamate + H(+). The enzyme catalyses L-glutamine + H2O = L-glutamate + NH4(+). The protein operates within amino-acid biosynthesis; L-histidine biosynthesis; L-histidine from 5-phospho-alpha-D-ribose 1-diphosphate: step 5/9. In terms of biological role, IGPS catalyzes the conversion of PRFAR and glutamine to IGP, AICAR and glutamate. The HisH subunit catalyzes the hydrolysis of glutamine to glutamate and ammonia as part of the synthesis of IGP and AICAR. The resulting ammonia molecule is channeled to the active site of HisF. This Streptococcus sanguinis (strain SK36) protein is Imidazole glycerol phosphate synthase subunit HisH.